The sequence spans 545 residues: Membrane protein insertase YidC (545 aa).

A run of 4 helical transmembrane segments spans residues I350–Y370, L424–V444, A461–L481, and P498–V518.

It belongs to the OXA1/ALB3/YidC family. Type 1 subfamily. As to quaternary structure, interacts with the Sec translocase complex via SecD. Specifically interacts with transmembrane segments of nascent integral membrane proteins during membrane integration.

It localises to the cell inner membrane. Required for the insertion and/or proper folding and/or complex formation of integral membrane proteins into the membrane. Involved in integration of membrane proteins that insert both dependently and independently of the Sec translocase complex, as well as at least some lipoproteins. Aids folding of multispanning membrane proteins. This Neisseria meningitidis serogroup B (strain ATCC BAA-335 / MC58) protein is Membrane protein insertase YidC.